A 61-amino-acid polypeptide reads, in one-letter code: Temporin-ALi (61 aa).

An N-terminal signal peptide occupies residues 1 to 22; it reads MFPLKKSLLLLFFLATINLSLC. The propeptide occupies 23–46; it reads EQERNAEEERRDEPDERNAEVEKR. Leucine amide is present on Leu59.

Belongs to the frog skin active peptide (FSAP) family. Temporin subfamily. In terms of tissue distribution, expressed by the skin glands.

It localises to the secreted. Its function is as follows. Antimicrobial peptide with activity against Gram-positive and Gram-negative bacteria and against fungi. Has been tested against S.aureus (MIC=7.5 ug/mL), B.pumilus (MIC=7.5 ug/mL), B.cereus (MIC=75.0 ug/mL), E.coli (MIC=7.5 ug/mL), B.dysenteriae (MIC=20.0 ug/mL), A.cacoaceticus (MIC=60.0 ug/mL), P.aeruginosa (MIC=5.0 ug/mL) and C.albicans (MIC=5.0 ug/mL). Also shows a weak hemolytic activity. The chain is Temporin-ALi from Amolops loloensis (Lolokou Sucker Frog).